Reading from the N-terminus, the 346-residue chain is Large ribosomal subunit protein uL10 (346 aa).

The disordered stretch occupies residues 305–346; that stretch reads EVPAAPAPEAKEEKKEEAEEEEEEKKEVSEEDLSAGLGALFG. Acidic residues predominate over residues 322–337; sequence AEEEEEEKKEVSEEDL.

This sequence belongs to the universal ribosomal protein uL10 family. In terms of assembly, part of the 50S ribosomal subunit. Forms part of the ribosomal stalk which helps the ribosome interact with GTP-bound translation factors. Forms a heptameric L10(L12)2(L12)2(L12)2 complex, where L10 forms an elongated spine to which the L12 dimers bind in a sequential fashion.

Functionally, forms part of the ribosomal stalk, playing a central role in the interaction of the ribosome with GTP-bound translation factors. This chain is Large ribosomal subunit protein uL10, found in Ignicoccus hospitalis (strain KIN4/I / DSM 18386 / JCM 14125).